A 323-amino-acid polypeptide reads, in one-letter code: Elongation factor P--(R)-beta-lysine ligase (323 aa).

Position 76–78 (76–78) interacts with substrate; that stretch reads SPE. ATP-binding positions include 100-102 and asparagine 109; that span reads RNE. A substrate-binding site is contributed by tyrosine 118. 242-243 provides a ligand contact to ATP; that stretch reads EL. Residue glutamate 249 coordinates substrate. Glycine 298 is a binding site for ATP.

The protein belongs to the class-II aminoacyl-tRNA synthetase family. EpmA subfamily. As to quaternary structure, homodimer.

The enzyme catalyses D-beta-lysine + L-lysyl-[protein] + ATP = N(6)-((3R)-3,6-diaminohexanoyl)-L-lysyl-[protein] + AMP + diphosphate + H(+). In terms of biological role, with EpmB is involved in the beta-lysylation step of the post-translational modification of translation elongation factor P (EF-P). Catalyzes the ATP-dependent activation of (R)-beta-lysine produced by EpmB, forming a lysyl-adenylate, from which the beta-lysyl moiety is then transferred to the epsilon-amino group of a conserved specific lysine residue in EF-P. The sequence is that of Elongation factor P--(R)-beta-lysine ligase from Mannheimia succiniciproducens (strain KCTC 0769BP / MBEL55E).